Reading from the N-terminus, the 112-residue chain is Protein preY, mitochondrial (112 aa).

Residues 1-34 (MLSATCRRLAPALRRLRALSAVAGRFLQVPGARL) constitute a mitochondrion transit peptide. One can recognise a TRM112 domain in the interval 49–95 (HPALLQFLVCPLSKKPLRYEASTNELVNEELGIAYPIIDGIPNMIPQ).

Belongs to the PREY family. In terms of assembly, interacts (via TRM112 domain) with NDUFAF5; the interaction is direct and stabilizes NDUFAF5 protein. Interacts with COQ5; the interaction is direct, stabilizes COQ5 protein and associates PYURF with COQ enzyme complex.

The protein resides in the mitochondrion. In terms of biological role, in mitochondria, S-adenosylmethionine-dependent methyltransferase chaperone that supports both coenzyme Q biosynthesis, by stabilizing its components, such as COQ5, and NADH:ubiquinone oxidoreductase complex (complex I, MT-ND1) assembly, by stabilizing complex I assembly factors, such as NDUFAF5. This chain is Protein preY, mitochondrial (Pyurf), found in Mus musculus (Mouse).